Consider the following 252-residue polypeptide: Chitooligosaccharide deacetylase (252 aa).

Positions 61 and 125 each coordinate Mg(2+).

The protein belongs to the YdjC deacetylase family. ChbG subfamily. Homodimer. Mg(2+) serves as cofactor.

It localises to the cytoplasm. It catalyses the reaction N,N'-diacetylchitobiose + H2O = N-acetyl-beta-D-glucosaminyl-(1-&gt;4)-D-glucosamine + acetate. The catalysed reaction is diacetylchitobiose-6'-phosphate + H2O = N'-monoacetylchitobiose-6'-phosphate + acetate. The protein operates within glycan degradation; chitin degradation. In terms of biological role, involved in the degradation of chitin. ChbG is essential for growth on the acetylated chitooligosaccharides chitobiose and chitotriose but is dispensable for growth on cellobiose and chitosan dimer, the deacetylated form of chitobiose. Deacetylation of chitobiose-6-P and chitotriose-6-P is necessary for both the activation of the chb promoter by the regulatory protein ChbR and the hydrolysis of phosphorylated beta-glucosides by the phospho-beta-glucosidase ChbF. Catalyzes the removal of only one acetyl group from chitobiose-6-P to yield monoacetylchitobiose-6-P, the inducer of ChbR and the substrate of ChbF. The chain is Chitooligosaccharide deacetylase from Escherichia coli (strain 55989 / EAEC).